Consider the following 529-residue polypeptide: Peptide chain release factor 3 (529 aa).

Residues 11–280 (NKRRTFAIIS…GLTEWAPKPQ (270 aa)) form the tr-type G domain. Residues 20–27 (SHPDAGKT), 88–92 (DTPGH), and 142–145 (NKLD) contribute to the GTP site.

This sequence belongs to the TRAFAC class translation factor GTPase superfamily. Classic translation factor GTPase family. PrfC subfamily.

Its subcellular location is the cytoplasm. Increases the formation of ribosomal termination complexes and stimulates activities of RF-1 and RF-2. It binds guanine nucleotides and has strong preference for UGA stop codons. It may interact directly with the ribosome. The stimulation of RF-1 and RF-2 is significantly reduced by GTP and GDP, but not by GMP. This is Peptide chain release factor 3 from Mannheimia succiniciproducens (strain KCTC 0769BP / MBEL55E).